The following is a 259-amino-acid chain: uncharacterized protein (259 aa).

The segment at residues M1–T19 is a signal peptide (or 26). G214–T221 lines the ATP pocket.

This is an uncharacterized protein from Bacillus subtilis (strain 168).